The following is a 339-amino-acid chain: Acyl-CoA dehydrogenase FadE28 (339 aa).

Positions 227, 238, 295, and 299 each coordinate FAD.

Belongs to the acyl-CoA dehydrogenase family. Heterotetramer composed of FadE28 and FadE29. It depends on FAD as a cofactor.

It carries out the reaction 3-oxochol-4-en-22-oyl-CoA + A = 3-oxochola-4,17-dien-22-oyl-CoA + AH2. It participates in steroid metabolism; cholesterol degradation. Its function is as follows. Involved in the third cycle of side chain dehydrogenation in the beta-oxidation of cholesterol catabolism. May play an important role for the initial macrophage invasion, possibly in response to the acidification of phagosome. It contributes partly to the virulence by increasing the efficiency of beta-oxidation. Catalyzes the dehydrogenation of 2'-propanoyl-CoA ester side chains of 3-oxo-4-pregnene-20-carboxyl-CoA (3-OPC-CoA) to yield 3-oxo-4,17-pregnadiene-20-carboxyl-CoA (3-OPDC-CoA). Also able to dehydrogenate steroyl-CoA such as 3-oxo-chol-4-en-24-oyl-CoA (3-OCO-CoA), 1beta-(2'-propanoyl-CoA)-3a-alpha-H-7a-beta-methylhexahydro-4-indanone (indanone-CoA ester), hexahydroindanone and pregenenone. In Mycobacterium tuberculosis (strain ATCC 25618 / H37Rv), this protein is Acyl-CoA dehydrogenase FadE28 (fadE28).